The following is a 118-amino-acid chain: Large ribosomal subunit protein eL18 (118 aa).

It belongs to the eukaryotic ribosomal protein eL18 family.

This is Large ribosomal subunit protein eL18 (rpl18e) from Sulfolobus acidocaldarius (strain ATCC 33909 / DSM 639 / JCM 8929 / NBRC 15157 / NCIMB 11770).